We begin with the raw amino-acid sequence, 136 residues long: Nucleoside diphosphate kinase (136 aa).

ATP contacts are provided by Lys10, Phe58, Arg86, Thr92, Arg104, and Asn114. His117 acts as the Pros-phosphohistidine intermediate in catalysis.

The protein belongs to the NDK family. As to quaternary structure, homotetramer. Requires Mg(2+) as cofactor.

It is found in the cytoplasm. It catalyses the reaction a 2'-deoxyribonucleoside 5'-diphosphate + ATP = a 2'-deoxyribonucleoside 5'-triphosphate + ADP. The enzyme catalyses a ribonucleoside 5'-diphosphate + ATP = a ribonucleoside 5'-triphosphate + ADP. Functionally, major role in the synthesis of nucleoside triphosphates other than ATP. The ATP gamma phosphate is transferred to the NDP beta phosphate via a ping-pong mechanism, using a phosphorylated active-site intermediate. The protein is Nucleoside diphosphate kinase of Mycolicibacterium gilvum (strain PYR-GCK) (Mycobacterium gilvum (strain PYR-GCK)).